Here is a 392-residue protein sequence, read N- to C-terminus: Methylthioribose-1-phosphate isomerase (392 aa).

The active-site Proton donor is the D267.

The protein belongs to the eIF-2B alpha/beta/delta subunits family. MtnA subfamily.

It is found in the cytoplasm. The protein localises to the nucleus. The enzyme catalyses 5-(methylsulfanyl)-alpha-D-ribose 1-phosphate = 5-(methylsulfanyl)-D-ribulose 1-phosphate. It functions in the pathway amino-acid biosynthesis; L-methionine biosynthesis via salvage pathway; L-methionine from S-methyl-5-thio-alpha-D-ribose 1-phosphate: step 1/6. Functionally, catalyzes the interconversion of methylthioribose-1-phosphate (MTR-1-P) into methylthioribulose-1-phosphate (MTRu-1-P). In Ajellomyces dermatitidis (strain ER-3 / ATCC MYA-2586) (Blastomyces dermatitidis), this protein is Methylthioribose-1-phosphate isomerase.